We begin with the raw amino-acid sequence, 203 residues long: A-type ATP synthase subunit E (203 aa).

The protein belongs to the V-ATPase E subunit family. Has multiple subunits with at least A(3), B(3), C, D, E, F, H, I and proteolipid K(x).

It is found in the cell membrane. Component of the A-type ATP synthase that produces ATP from ADP in the presence of a proton gradient across the membrane. This chain is A-type ATP synthase subunit E, found in Methanococcus maripaludis (strain C6 / ATCC BAA-1332).